The following is a 374-amino-acid chain: Dual-specificity RNA methyltransferase RlmN (374 aa).

Glu91 acts as the Proton acceptor in catalysis. Residues 97–340 enclose the Radical SAM core domain; that stretch reads EDDRGTLCVS…TTVRKTRGDD (244 aa). Cys104 and Cys345 are disulfide-bonded. [4Fe-4S] cluster-binding residues include Cys111, Cys115, and Cys118. S-adenosyl-L-methionine-binding positions include 166–167, Ser198, 220–222, and Asn302; these read GE and SLH. Cys345 acts as the S-methylcysteine intermediate in catalysis.

Belongs to the radical SAM superfamily. RlmN family. It depends on [4Fe-4S] cluster as a cofactor.

Its subcellular location is the cytoplasm. The enzyme catalyses adenosine(2503) in 23S rRNA + 2 reduced [2Fe-2S]-[ferredoxin] + 2 S-adenosyl-L-methionine = 2-methyladenosine(2503) in 23S rRNA + 5'-deoxyadenosine + L-methionine + 2 oxidized [2Fe-2S]-[ferredoxin] + S-adenosyl-L-homocysteine. It catalyses the reaction adenosine(37) in tRNA + 2 reduced [2Fe-2S]-[ferredoxin] + 2 S-adenosyl-L-methionine = 2-methyladenosine(37) in tRNA + 5'-deoxyadenosine + L-methionine + 2 oxidized [2Fe-2S]-[ferredoxin] + S-adenosyl-L-homocysteine. Specifically methylates position 2 of adenine 2503 in 23S rRNA and position 2 of adenine 37 in tRNAs. m2A2503 modification seems to play a crucial role in the proofreading step occurring at the peptidyl transferase center and thus would serve to optimize ribosomal fidelity. In Delftia acidovorans (strain DSM 14801 / SPH-1), this protein is Dual-specificity RNA methyltransferase RlmN.